The primary structure comprises 416 residues: Probable tRNA pseudouridine synthase D (416 aa).

The active-site Nucleophile is the aspartate 83. Residues 158 to 379 (GFPNYFGYQR…PGGRRELLIR (222 aa)) form the TRUD domain.

It belongs to the pseudouridine synthase TruD family.

The catalysed reaction is uridine(13) in tRNA = pseudouridine(13) in tRNA. Could be responsible for synthesis of pseudouridine from uracil-13 in transfer RNAs. The chain is Probable tRNA pseudouridine synthase D from Thermococcus onnurineus (strain NA1).